The sequence spans 235 residues: Peptidyl-tRNA hydrolase (235 aa).

A tRNA-binding site is contributed by Y14. The Proton acceptor role is filled by H19. TRNA contacts are provided by F64, N66, and N112. The segment at 188 to 235 is disordered; sequence APARNSGTRPDNPGKGSPEKPAAKPANDPIAEPPSLSDRLRALTERFR. Basic and acidic residues predominate over residues 225-235; that stretch reads DRLRALTERFR.

Belongs to the PTH family. As to quaternary structure, monomer.

It localises to the cytoplasm. It catalyses the reaction an N-acyl-L-alpha-aminoacyl-tRNA + H2O = an N-acyl-L-amino acid + a tRNA + H(+). Its function is as follows. Hydrolyzes ribosome-free peptidyl-tRNAs (with 1 or more amino acids incorporated), which drop off the ribosome during protein synthesis, or as a result of ribosome stalling. Catalyzes the release of premature peptidyl moieties from peptidyl-tRNA molecules trapped in stalled 50S ribosomal subunits, and thus maintains levels of free tRNAs and 50S ribosomes. This chain is Peptidyl-tRNA hydrolase, found in Paracoccus denitrificans (strain Pd 1222).